The following is a 163-amino-acid chain: Nucleotide-binding protein HD_0358 (163 aa).

It belongs to the YajQ family.

In terms of biological role, nucleotide-binding protein. This Haemophilus ducreyi (strain 35000HP / ATCC 700724) protein is Nucleotide-binding protein HD_0358.